The chain runs to 109 residues: Ribonuclease P protein component (109 aa).

It belongs to the RnpA family. In terms of assembly, consists of a catalytic RNA component (M1 or rnpB) and a protein subunit.

The enzyme catalyses Endonucleolytic cleavage of RNA, removing 5'-extranucleotides from tRNA precursor.. In terms of biological role, RNaseP catalyzes the removal of the 5'-leader sequence from pre-tRNA to produce the mature 5'-terminus. It can also cleave other RNA substrates such as 4.5S RNA. The protein component plays an auxiliary but essential role in vivo by binding to the 5'-leader sequence and broadening the substrate specificity of the ribozyme. This chain is Ribonuclease P protein component, found in Mycoplasma capricolum subsp. capricolum (strain California kid / ATCC 27343 / NCTC 10154).